The sequence spans 371 residues: Conglutinin (371 aa).

A signal peptide spans 1 to 20 (MLLLPLSVLLLLTQPWRSLG). The Collagen-like domain maps to 46-216 (GLPGHDGQDG…TGAKGESGLA (171 aa)). Residues 47–215 (LPGHDGQDGR…ETGAKGESGL (169 aa)) form a disordered region. Over residues 51–65 (DGQDGRECPHGEKGD) the composition is skewed to basic and acidic residues. K63 is modified (5-hydroxylysine). Over residues 71–83 (PAGRAGRPGWVGP) the composition is skewed to low complexity. P78 carries the 4-hydroxyproline modification. The residue at position 87 (K87) is a 5-hydroxylysine. Position 96 is a 4-hydroxyproline (P96). K99 carries the post-translational modification 5-hydroxylysine. Residues P108, P111, P129, and P132 each carry the 4-hydroxyproline modification. A 5-hydroxylysine mark is found at K135 and K141. The span at 139 to 148 (GPKGGVGAPG) shows a compositional bias: gly residues. 2 positions are modified to 4-hydroxyproline: P147 and P153. 5-hydroxylysine occurs at positions 159 and 162. A 4-hydroxyproline mark is found at P171 and P195. A 5-hydroxylysine modification is found at K198. A Cell attachment site motif is present at residues 201–203 (RGD). The region spanning 273–371 (QLCREAKGQL…SKQLLVICEF (99 aa)) is the C-type lectin domain. 2 disulfides stabilise this stretch: C275–C369 and C347–C361. Residue N337 is glycosylated (N-linked (GlcNAc...) asparagine).

Belongs to the SFTPD family. In terms of assembly, oligomeric complex of 4 set of homotrimers. In terms of processing, the hydroxylysines may be O-glycosylated.

Calcium-dependent lectin-like protein which binds to a yeast cell wall extract and immune complexes through the complement component (C3bi). It is capable of binding non-reducing terminal N-acetylglucosamine, mannose, and fucose residues. The chain is Conglutinin (CGN1) from Bos taurus (Bovine).